The primary structure comprises 249 residues: Uridylate kinase (249 aa).

Position 15–18 (15–18 (KLSG)) interacts with ATP. Residues 23–28 (GDEGFG) are involved in allosteric activation by GTP. Position 57 (Gly-57) interacts with UMP. ATP is bound by residues Gly-58 and Arg-62. UMP contacts are provided by residues Asp-77 and 138-145 (TGNPFFTT). The ATP site is built by Thr-165, Tyr-171, and Asp-174.

This sequence belongs to the UMP kinase family. As to quaternary structure, homohexamer.

Its subcellular location is the cytoplasm. The enzyme catalyses UMP + ATP = UDP + ADP. It participates in pyrimidine metabolism; CTP biosynthesis via de novo pathway; UDP from UMP (UMPK route): step 1/1. Its activity is regulated as follows. Allosterically activated by GTP. Inhibited by UTP. In terms of biological role, catalyzes the reversible phosphorylation of UMP to UDP. The protein is Uridylate kinase of Pseudoalteromonas translucida (strain TAC 125).